We begin with the raw amino-acid sequence, 354 residues long: Guanine nucleotide-binding protein G(t) subunit alpha-2 (354 aa).

Positions 1 to 27 (MGSGASAEDKELAKRSKELEKKLQEDA) are disordered. Glycine 2 carries the N-myristoyl glycine lipid modification. The span at 7–27 (AEDKELAKRSKELEKKLQEDA) shows a compositional bias: basic and acidic residues. A G-alpha domain is found at 32 to 354 (KTVKLLLLGA…KENLKDCGLF (323 aa)). The interval 35–48 (KLLLLGAGESGKST) is G1 motif. GTP-binding positions include 40-47 (GAGESGKS), 175-181 (LRSRVKT), 200-204 (DVGGQ), 269-272 (NKKD), and alanine 326. Serine 47 is a binding site for Mg(2+). Positions 173-181 (DVLRSRVKT) are G2 motif. Arginine 178 is subject to ADP-ribosylarginine; by cholera toxin. Threonine 181 provides a ligand contact to Mg(2+). A G3 motif region spans residues 196 to 205 (FRMFDVGGQR). Residues 265 to 272 (VLFLNKKD) are G4 motif. The interval 324-329 (TCATDT) is G5 motif. Cysteine 351 carries the ADP-ribosylcysteine; by pertussis toxin modification.

It belongs to the G-alpha family. G(i/o/t/z) subfamily. G proteins are composed of 3 units; alpha, beta and gamma. The alpha chain contains the guanine nucleotide binding site. In terms of tissue distribution, retinal rod outer segment.

It is found in the cell projection. Its subcellular location is the cilium. The protein localises to the photoreceptor outer segment. The protein resides in the photoreceptor inner segment. Guanine nucleotide-binding proteins (G proteins) are involved as modulators or transducers in various transmembrane signaling systems. Transducin is an amplifier and one of the transducers of a visual impulse that performs the coupling between rhodopsin and cGMP-phosphodiesterase. The sequence is that of Guanine nucleotide-binding protein G(t) subunit alpha-2 (GNAT2) from Homo sapiens (Human).